The chain runs to 263 residues: MVRRLLALSRPLYWLYEQRLLREVKRGPMPRHLGLILDGNRRYARALGLSPTKGHEFGVQKAYEVLEWCLEMGIKTVTVWVFSTDNFKRPPEEVETLMNLFLREAERMAEDHRILEHQVRVRFIGRREGFSPEVVRAIERLERRTEGHRGMFLNIALGYGGREEIVDAVKRLLLEAEARGLSPKEVAEGLTPEDIARHLYTAGLPDPDFIIRTSGEIRLSGFLLWQSAYSEFYFADVLWPEFRKIDFLRALRSYQARERRFGR.

Aspartate 38 is a catalytic residue. Aspartate 38 serves as a coordination point for Mg(2+). Substrate-binding positions include 39–42 (GNRR), histidine 55, and 83–85 (STD). Asparagine 86 acts as the Proton acceptor in catalysis. Residues phenylalanine 87, arginine 89, arginine 212, and 218–220 (RLS) contribute to the substrate site. Mg(2+) is bound at residue glutamate 231.

The protein belongs to the UPP synthase family. Homodimer. Mg(2+) is required as a cofactor.

In terms of biological role, catalyzes the condensation of isopentenyl diphosphate (IPP) with allylic pyrophosphates generating different type of terpenoids. The polypeptide is Isoprenyl transferase (Thermus thermophilus (strain ATCC BAA-163 / DSM 7039 / HB27)).